A 224-amino-acid polypeptide reads, in one-letter code: Cytidylate kinase (224 aa).

Residue 11 to 19 (GPASAGKST) coordinates ATP.

Belongs to the cytidylate kinase family. Type 1 subfamily.

Its subcellular location is the cytoplasm. The enzyme catalyses CMP + ATP = CDP + ADP. It carries out the reaction dCMP + ATP = dCDP + ADP. This chain is Cytidylate kinase, found in Ligilactobacillus salivarius (strain UCC118) (Lactobacillus salivarius).